The sequence spans 164 residues: Flavodoxin (164 aa).

Residues 4-160 (IGIFFGTDSG…RISKWVEQVK (157 aa)) enclose the Flavodoxin-like domain.

This sequence belongs to the flavodoxin family. FMN serves as cofactor.

Its function is as follows. Low-potential electron donor to a number of redox enzymes. The chain is Flavodoxin (fldA) from Helicobacter pylori (strain ATCC 700392 / 26695) (Campylobacter pylori).